The primary structure comprises 234 residues: Probable plastid-lipid-associated protein 5, chloroplastic (234 aa).

A chloroplast-targeting transit peptide spans Met-1–Arg-45.

Belongs to the PAP/fibrillin family.

The protein resides in the plastid. It localises to the chloroplast thylakoid. The sequence is that of Probable plastid-lipid-associated protein 5, chloroplastic (PAP5) from Arabidopsis thaliana (Mouse-ear cress).